The chain runs to 606 residues: NADH-ubiquinone oxidoreductase chain 5 (606 aa).

16 consecutive transmembrane segments (helical) span residues 1-21 (MNLF…PIMM), 35-55 (YVKN…MVYL), 87-107 (LMFM…SMWY), 114-134 (INQF…LVTA), 140-160 (LFIG…WWFG), 171-191 (AILY…WFLS), 211-233 (FPLM…HPWL), 241-261 (TPVS…FLLV), 272-292 (LIQT…AICA), 301-320 (IIAF…IGLN), 325-347 (AFLH…GSII), 366-386 (LPFT…MPFL), 413-433 (LIAT…ALLG), 457-477 (LLVG…PMTT), 482-502 (MPLH…IIAF), and 582-602 (GLIK…MILF).

This sequence belongs to the complex I subunit 5 family. As to quaternary structure, core subunit of respiratory chain NADH dehydrogenase (Complex I) which is composed of 45 different subunits.

Its subcellular location is the mitochondrion inner membrane. The catalysed reaction is a ubiquinone + NADH + 5 H(+)(in) = a ubiquinol + NAD(+) + 4 H(+)(out). Core subunit of the mitochondrial membrane respiratory chain NADH dehydrogenase (Complex I) which catalyzes electron transfer from NADH through the respiratory chain, using ubiquinone as an electron acceptor. Essential for the catalytic activity and assembly of complex I. The sequence is that of NADH-ubiquinone oxidoreductase chain 5 (MT-ND5) from Balaenoptera physalus (Fin whale).